Reading from the N-terminus, the 211-residue chain is Probable nicotinate-nucleotide adenylyltransferase (211 aa).

It belongs to the NadD family.

The enzyme catalyses nicotinate beta-D-ribonucleotide + ATP + H(+) = deamido-NAD(+) + diphosphate. Its pathway is cofactor biosynthesis; NAD(+) biosynthesis; deamido-NAD(+) from nicotinate D-ribonucleotide: step 1/1. Functionally, catalyzes the reversible adenylation of nicotinate mononucleotide (NaMN) to nicotinic acid adenine dinucleotide (NaAD). In Cellvibrio japonicus (strain Ueda107) (Pseudomonas fluorescens subsp. cellulosa), this protein is Probable nicotinate-nucleotide adenylyltransferase.